Consider the following 228-residue polypeptide: Tungstate uptake system permease protein TupB (228 aa).

A run of 5 helical transmembrane segments spans residues 25 to 45 (IIFLSVFVSSTATAIAAAVSI), 65 to 85 (VLYSLMSVPSVIVGLVVAIGL), 102 to 122 (AMIIAQALLVFPLCLGLTYSL), 144 to 164 (VIILIIRELKAELFINVVTTF), and 203 to 223 (MAIALGLVLLMISFAINAVIY). An ABC transmembrane type-1 domain is found at 26–222 (IFLSVFVSST…MISFAINAVI (197 aa)).

This sequence belongs to the binding-protein-dependent transport system permease family. In terms of assembly, the complex is composed of two ATP-binding proteins (TupC), two transmembrane proteins (TupB) and a solute-binding protein (TupA).

Its subcellular location is the cell membrane. Part of an ABC transporter complex involved in tungstate uptake. Probably responsible for the translocation of the substrate across the membrane. In Peptoclostridium acidaminophilum (Eubacterium acidaminophilum), this protein is Tungstate uptake system permease protein TupB.